A 950-amino-acid chain; its full sequence is Bifunctional glutamine synthetase adenylyltransferase/adenylyl-removing enzyme (950 aa).

The interval 1–443 is adenylyl removase; sequence MSLPSPLLPV…VFVTLIGDEE (443 aa). The tract at residues 450 to 950 is adenylyl transferase; sequence ERHFNELWDM…WQEWLESSTI (501 aa).

The protein belongs to the GlnE family. The cofactor is Mg(2+).

The catalysed reaction is [glutamine synthetase]-O(4)-(5'-adenylyl)-L-tyrosine + phosphate = [glutamine synthetase]-L-tyrosine + ADP. It carries out the reaction [glutamine synthetase]-L-tyrosine + ATP = [glutamine synthetase]-O(4)-(5'-adenylyl)-L-tyrosine + diphosphate. Involved in the regulation of glutamine synthetase GlnA, a key enzyme in the process to assimilate ammonia. When cellular nitrogen levels are high, the C-terminal adenylyl transferase (AT) inactivates GlnA by covalent transfer of an adenylyl group from ATP to specific tyrosine residue of GlnA, thus reducing its activity. Conversely, when nitrogen levels are low, the N-terminal adenylyl removase (AR) activates GlnA by removing the adenylyl group by phosphorolysis, increasing its activity. The regulatory region of GlnE binds the signal transduction protein PII (GlnB) which indicates the nitrogen status of the cell. The sequence is that of Bifunctional glutamine synthetase adenylyltransferase/adenylyl-removing enzyme from Vibrio vulnificus (strain YJ016).